The following is a 417-amino-acid chain: Protein-lysine 6-oxidase (417 aa).

Positions 1-21 (MRFAWTVLLLGPLQLCALVHC) are cleaved as a signal peptide. A propeptide spans 22–168 (APPAAGQQQP…PPSRVDGMVG (147 aa)) (removed by BMP1). The interval 64–89 (YQPQRRRDPGAAVPGAANASAQQPRT) is disordered. Residues 73–84 (GAAVPGAANASA) show a composition bias toward low complexity. Asn-81, Asn-97, and Asn-144 each carry an N-linked (GlcNAc...) asparagine glycan. The disordered stretch occupies residues 137 to 174 (AGASRAENQTAPGEVPALSNLRPPSRVDGMVGDDPYNP). Sulfotyrosine is present on Tyr-187. Residues 213–417 (PDLVADPYYI…YASGCTISPY (205 aa)) form a lysyl-oxidase like region. Cystine bridges form between Cys-238-Cys-244, Cys-291-Cys-340, Cys-324-Cys-330, Cys-351-Cys-361, and Cys-398-Cys-412. Cu cation-binding residues include His-292, His-294, and His-296. Residues 320 to 355 (KASFCLEDTSCDYGYHRRFACTAHTQGLSPGCYDTY) constitute a cross-link (lysine tyrosylquinone (Lys-Tyr)). A 2',4',5'-topaquinone modification is found at Tyr-355.

Belongs to the lysyl oxidase family. In terms of assembly, interacts with MFAP4. Interacts (via propeptide) with EFEMP2; this interaction is strong and facilitates formation of ternary complexes with ELN during elastic fiber assembly; this interaction limits interaction of EFEMP2 with FBLN5. Cu cation serves as cofactor. Lysine tyrosylquinone residue is required as a cofactor. The lysine tyrosylquinone cross-link (LTQ) is generated by condensation of the epsilon-amino group of a lysine with a topaquinone produced by oxidation of tyrosine. In terms of processing, proteolytically cleaved by BMP1 which removes the propeptide. Also proteolytically cleaved by ADAMTS2 and ADAMTS14, but not by ADAMTS3, at an additional cleavage site downstream of the BMP1 cleavage site. The propeptide plays a role in directing the deposition of this enzyme to elastic fibers, via interaction with tropoelastin. Cleavage by BMP1 to remove the propeptide does not increase enzymatic activity but increases binding to collagen. Cleavage by ADAMTS2 produces a form with reduced collagen-binding activity. Post-translationally, sulfated at Tyr-187 and also at either Tyr-183 or Tyr-184 which enhances binding to collagen. Heart, placenta, skeletal muscle, kidney, lung and pancreas.

The protein localises to the secreted. Its subcellular location is the extracellular space. The catalysed reaction is L-lysyl-[protein] + O2 + H2O = (S)-2-amino-6-oxohexanoyl-[protein] + H2O2 + NH4(+). In terms of biological role, responsible for the post-translational oxidative deamination of peptidyl lysine residues in precursors to fibrous collagen and elastin. Regulator of Ras expression. May play a role in tumor suppression. Plays a role in the aortic wall architecture. The polypeptide is Protein-lysine 6-oxidase (LOX) (Homo sapiens (Human)).